Here is a 415-residue protein sequence, read N- to C-terminus: Gamma-glutamyl phosphate reductase (415 aa).

Belongs to the gamma-glutamyl phosphate reductase family.

It is found in the cytoplasm. The catalysed reaction is L-glutamate 5-semialdehyde + phosphate + NADP(+) = L-glutamyl 5-phosphate + NADPH + H(+). It participates in amino-acid biosynthesis; L-proline biosynthesis; L-glutamate 5-semialdehyde from L-glutamate: step 2/2. Functionally, catalyzes the NADPH-dependent reduction of L-glutamate 5-phosphate into L-glutamate 5-semialdehyde and phosphate. The product spontaneously undergoes cyclization to form 1-pyrroline-5-carboxylate. The polypeptide is Gamma-glutamyl phosphate reductase (Bacillus mycoides (strain KBAB4) (Bacillus weihenstephanensis)).